The chain runs to 102 residues: Large ribosomal subunit protein bL21 (102 aa).

This sequence belongs to the bacterial ribosomal protein bL21 family. Part of the 50S ribosomal subunit. Contacts protein L20.

Its function is as follows. This protein binds to 23S rRNA in the presence of protein L20. The protein is Large ribosomal subunit protein bL21 of Leifsonia xyli subsp. xyli (strain CTCB07).